Here is an 89-residue protein sequence, read N- to C-terminus: Small ribosomal subunit protein uS15 (89 aa).

Belongs to the universal ribosomal protein uS15 family. In terms of assembly, part of the 30S ribosomal subunit. Forms a bridge to the 50S subunit in the 70S ribosome, contacting the 23S rRNA.

In terms of biological role, one of the primary rRNA binding proteins, it binds directly to 16S rRNA where it helps nucleate assembly of the platform of the 30S subunit by binding and bridging several RNA helices of the 16S rRNA. Forms an intersubunit bridge (bridge B4) with the 23S rRNA of the 50S subunit in the ribosome. This Pseudomonas fluorescens (strain SBW25) protein is Small ribosomal subunit protein uS15.